Consider the following 84-residue polypeptide: Putative membrane protein insertion efficiency factor (84 aa).

The disordered stretch occupies residues 63–84; sequence WGGSGYDPVPGADPEHDRRPRG. A compositionally biased stretch (basic and acidic residues) spans 75–84; the sequence is DPEHDRRPRG.

The protein belongs to the UPF0161 family.

It localises to the cell inner membrane. In terms of biological role, could be involved in insertion of integral membrane proteins into the membrane. This is Putative membrane protein insertion efficiency factor from Cereibacter sphaeroides (strain ATCC 17025 / ATH 2.4.3) (Rhodobacter sphaeroides).